Here is a 273-residue protein sequence, read N- to C-terminus: Dermonecrotic toxin LdSicTox-alphaIB3aiii (273 aa).

The active site involves H5. Residues E25 and D27 each coordinate Mg(2+). The active-site Nucleophile is H41. 2 cysteine pairs are disulfide-bonded: C45-C51 and C47-C190. D85 is a binding site for Mg(2+).

Belongs to the arthropod phospholipase D family. Class II subfamily. Mg(2+) is required as a cofactor. As to expression, expressed by the venom gland.

The protein resides in the secreted. The enzyme catalyses an N-(acyl)-sphingosylphosphocholine = an N-(acyl)-sphingosyl-1,3-cyclic phosphate + choline. It carries out the reaction an N-(acyl)-sphingosylphosphoethanolamine = an N-(acyl)-sphingosyl-1,3-cyclic phosphate + ethanolamine. It catalyses the reaction a 1-acyl-sn-glycero-3-phosphocholine = a 1-acyl-sn-glycero-2,3-cyclic phosphate + choline. The catalysed reaction is a 1-acyl-sn-glycero-3-phosphoethanolamine = a 1-acyl-sn-glycero-2,3-cyclic phosphate + ethanolamine. In terms of biological role, dermonecrotic toxins cleave the phosphodiester linkage between the phosphate and headgroup of certain phospholipids (sphingolipid and lysolipid substrates), forming an alcohol (often choline) and a cyclic phosphate. This toxin acts on sphingomyelin (SM). It may also act on ceramide phosphoethanolamine (CPE), lysophosphatidylcholine (LPC) and lysophosphatidylethanolamine (LPE), but not on lysophosphatidylserine (LPS), and lysophosphatidylglycerol (LPG). It acts by transphosphatidylation, releasing exclusively cyclic phosphate products as second products. Induces dermonecrosis, hemolysis, increased vascular permeability, edema, inflammatory response, and platelet aggregation. The protein is Dermonecrotic toxin LdSicTox-alphaIB3aiii of Loxosceles deserta (Desert recluse spider).